A 470-amino-acid chain; its full sequence is Probable glycosyltransferase At3g07620 (470 aa).

The Cytoplasmic portion of the chain corresponds to 1–7; it reads MRDYIPK. A helical; Signal-anchor membrane pass occupies residues 8-28; it reads YLNAFLLAFATFAVGFAIFIA. The Lumenal portion of the chain corresponds to 29–470; sequence KDSNSSSHLY…WLRRLNVKLL (442 aa). N-linked (GlcNAc...) asparagine glycans are attached at residues Asn-32, Asn-73, Asn-105, Asn-236, Asn-274, and Asn-299.

It belongs to the glycosyltransferase 47 family.

The protein resides in the golgi apparatus membrane. In terms of biological role, may be involved in cell wall biosynthesis. This chain is Probable glycosyltransferase At3g07620, found in Arabidopsis thaliana (Mouse-ear cress).